Reading from the N-terminus, the 681-residue chain is Cadmium, zinc and cobalt-transporting ATPase (681 aa).

In terms of domain architecture, HMA spans 1–66; sequence MQKYHFTGLD…LEPDMELSEQ (66 aa). Residues 1–72 are Cytoplasmic-facing; it reads MQKYHFTGLD…LSEQVQSEAK (72 aa). Positions 11 and 14 each coordinate Cd(2+). Residues cysteine 11 and cysteine 14 each coordinate Co(2+). Zn(2+) is bound by residues cysteine 11 and cysteine 14. The helical transmembrane segment at 73–92 threads the bilayer; that stretch reads PSAIPLLLSVVLYLIAVATI. Residues 93–102 are Extracellular-facing; sequence HFSAQNWALH. A helical membrane pass occupies residues 103–124; it reads LSYALLAGVYLVAGKDVFLGAL. Over 125 to 131 the chain is Cytoplasmic; sequence RAIRNKQ. A helical transmembrane segment spans residues 132–151; the sequence is FFDENTLMLSATIAAFGVGA. Residues 152–154 lie on the Extracellular side of the membrane; that stretch reads HEE. A helical transmembrane segment spans residues 155–174; the sequence is AVSIMVFYSAGEFLQQLAIA. Topologically, residues 175–308 are cytoplasmic; sequence RSKQSLHALL…ITTFARYYTP (134 aa). The chain crosses the membrane as a helical span at residues 309–327; that stretch reads AVFAIALLIALVPPLLGHG. The Extracellular segment spans residues 328 to 332; the sequence is DFDTW. The chain crosses the membrane as a helical span at residues 333–350; that stretch reads IYRGLFALMVSCPCALVI. Over 351–630 the chain is Cytoplasmic; it reads SVPLGYFGGV…VFKIAKKTKR (280 aa). Aspartate 388 serves as the catalytic 4-aspartylphosphate intermediate. Mg(2+) is bound by residues aspartate 578 and aspartate 582. A helical membrane pass occupies residues 631–652; the sequence is IIIENIIFALAIKAMFIVLGLS. Topologically, residues 653–660 are extracellular; it reads GDASLWEA. A helical membrane pass occupies residues 661-676; it reads VLGDVGVTLIALANSM. Residues 677–681 are Cytoplasmic-facing; it reads RTMRI.

Belongs to the cation transport ATPase (P-type) (TC 3.A.3) family. Type IB subfamily.

Its subcellular location is the cell membrane. It catalyses the reaction Zn(2+)(in) + ATP + H2O = Zn(2+)(out) + ADP + phosphate + H(+). The enzyme catalyses Cd(2+)(in) + ATP + H2O = Cd(2+)(out) + ADP + phosphate + H(+). Couples the hydrolysis of ATP with the transport of cadmium, zinc and cobalt out of the cell. This chain is Cadmium, zinc and cobalt-transporting ATPase (cadA), found in Helicobacter felis.